Here is a 91-residue protein sequence, read N- to C-terminus: Cytochrome b-c1 complex subunit 6, mitochondrial (91 aa).

Residues methionine 1–serine 13 constitute a mitochondrion transit peptide. The disordered stretch occupies residues methionine 1 to leucine 30. Acidic residues predominate over residues glycine 14–valine 27. Intrachain disulfides connect cysteine 37–cysteine 81 and cysteine 53–cysteine 67. Lysine 42 bears the N6-acetyllysine mark. Lysine 85 is subject to N6-acetyllysine.

It belongs to the UQCRH/QCR6 family. In terms of assembly, component of the ubiquinol-cytochrome c oxidoreductase (cytochrome b-c1 complex, complex III, CIII), a multisubunit enzyme composed of 11 subunits. The complex is composed of 3 respiratory subunits cytochrome b, cytochrome c1 and Rieske protein UQCRFS1, 2 core protein subunits UQCRC1/QCR1 and UQCRC2/QCR2, and 6 low-molecular weight protein subunits UQCRH/QCR6, UQCRB/QCR7, UQCRQ/QCR8, UQCR10/QCR9, UQCR11/QCR10 and subunit 9, the cleavage product of Rieske protein UQCRFS1. The complex exists as an obligatory dimer and forms supercomplexes (SCs) in the inner mitochondrial membrane with NADH-ubiquinone oxidoreductase (complex I, CI) and cytochrome c oxidase (complex IV, CIV), resulting in different assemblies (supercomplex SCI(1)III(2)IV(1) and megacomplex MCI(2)III(2)IV(2)).

The protein localises to the mitochondrion inner membrane. Component of the ubiquinol-cytochrome c oxidoreductase, a multisubunit transmembrane complex that is part of the mitochondrial electron transport chain which drives oxidative phosphorylation. The respiratory chain contains 3 multisubunit complexes succinate dehydrogenase (complex II, CII), ubiquinol-cytochrome c oxidoreductase (cytochrome b-c1 complex, complex III, CIII) and cytochrome c oxidase (complex IV, CIV), that cooperate to transfer electrons derived from NADH and succinate to molecular oxygen, creating an electrochemical gradient over the inner membrane that drives transmembrane transport and the ATP synthase. The cytochrome b-c1 complex catalyzes electron transfer from ubiquinol to cytochrome c, linking this redox reaction to translocation of protons across the mitochondrial inner membrane, with protons being carried across the membrane as hydrogens on the quinol. In the process called Q cycle, 2 protons are consumed from the matrix, 4 protons are released into the intermembrane space and 2 electrons are passed to cytochrome c. This is Cytochrome b-c1 complex subunit 6, mitochondrial (UQCRH) from Homo sapiens (Human).